The following is a 544-amino-acid chain: GDP-mannose 4,6-dehydratase sdnI (544 aa).

NADP(+) contacts are provided by residues 16-21, Arg41, 64-65, and 86-90; these read GITGQD, DM, and LAAQS. Residue Ser90 participates in substrate binding. Catalysis depends on nucleophile residues Glu135 and Tyr157. Tyr157 serves as a coordination point for substrate. Position 161 (Lys161) interacts with NADP(+). Residue Asn186 coordinates substrate. Residues His187 and Arg192 each contribute to the NADP(+) site. Residues 192–200, Gly219, Arg225, and 303–306 each bind substrate; these read RGTTFVTRK and RPVE. The tract at residues 366–406 is disordered; the sequence is GETTSAVNSSPSSTAGDTYKASDGWSTSGAEGSEQTECSSV. Polar residues-rich tracts occupy residues 368 to 381 and 389 to 404; these read TTSA…STAG and GWST…TECS.

Belongs to the NAD(P)-dependent epimerase/dehydratase family. GDP-mannose 4,6-dehydratase subfamily. NADP(+) is required as a cofactor.

It carries out the reaction GDP-alpha-D-mannose = GDP-4-dehydro-alpha-D-rhamnose + H2O. It functions in the pathway antibiotic biosynthesis. Functionally, GDP-mannose 4,6-dehydratase; part of the gene cluster that mediates the biosynthesis of sordarin and hypoxysordarin, glycoside antibiotics with a unique tetracyclic diterpene aglycone structure. First, the geranylgeranyl diphosphate synthase sdnC constructs GGDP from farnesyl diphosphate and isopentenyl diphosphate. The diterpene cyclase sdnA then catalyzes the cyclization of GGDP to afford cycloaraneosene. Cycloaraneosene is then hydroxylated four times by the putative cytochrome P450 monooxygenases sdnB, sdnE, sdnF and sdnH to give a hydroxylated cycloaraneosene derivative such as cycloaraneosene-8,9,13,19-tetraol. Although the order of the hydroxylations is unclear, at least C8, C9 and C13 of the cycloaraneosene skeleton are hydroxylated before the sordaricin formation. Dehydration of the 13-hydroxy group of the hydroxylated cycloaraneosene derivative might be catalyzed by an unassigned hypothetical protein such as sdnG and sdnP to construct the cyclopentadiene moiety. The FAD-dependent oxidoreductase sdnN is proposed to catalyze the oxidation at C9 of the hydroxylated cycloaraneosene derivative and also catalyze the Baeyer-Villiger oxidation to give the lactone intermediate. The presumed lactone intermediate would be hydrolyzed to give an acrolein moiety and a carboxylate moiety. Then, [4+2]cycloaddition would occur between the acrolein moiety and the cyclopentadiene moiety to give sordaricin. SdnN might also be involved in the [4+2]cycloaddition after the hypothesized oxidation to accommodate the oxidized product and prompt the [4+2]cycloaddition. GDP-6-deoxy-D-altrose may be biosynthesized from GDP-D-mannose by the putative GDP-mannose-4,6-dehydratase sdnI and the short-chain dehydrogenase sdnK. The glycosyltransferase sdnJ catalyzes the attachment of 6-deoxy-D-altrose onto the 19-hydroxy group of sordaricin to give 4'-O-demethylsordarin. The methyltransferase sdnD would complete the biosynthesis of sordarin. Sordarin can be further modified into hypoxysordarin. The unique acyl chain at the 3'-hydroxy group of hypoxysordarin would be constructed by an iterative type I PKS sdnO and the trans-acting polyketide methyltransferase sdnL. SdnL would be responsible for the introduction of an alpha-methyl group of the polyketide chain. Alternatively, the beta-lactamase-like protein sdnR might be responsible for the cleavage and transfer of the polyketide chain from the PKS sdnO to sordarin. Two putative cytochrome P450 monooxygenases, sdnQ and sdnT, might catalyze the epoxidations of the polyketide chain to complete the biosynthesis of hypoxysordarin. Transcriptional regulators sdnM and sdnS are presumably encoded for the transcriptional regulation of the expression of the sdn gene cluster. The polypeptide is GDP-mannose 4,6-dehydratase sdnI (Sordaria araneosa (Pleurage araneosa)).